Consider the following 245-residue polypeptide: Probable phosphatase YcdX (245 aa).

Zn(2+) is bound by residues His-7, His-9, His-15, His-40, Glu-73, His-101, His-131, Asp-192, and His-194.

Belongs to the PHP family. In terms of assembly, homotrimer. It depends on Zn(2+) as a cofactor.

This is Probable phosphatase YcdX from Salmonella heidelberg (strain SL476).